A 302-amino-acid polypeptide reads, in one-letter code: Putative S-adenosyl-L-methionine-dependent methyltransferase MAP_1622c (302 aa).

S-adenosyl-L-methionine-binding positions include Asp-129 and 158–159 (DL).

The protein belongs to the UPF0677 family.

Exhibits S-adenosyl-L-methionine-dependent methyltransferase activity. The polypeptide is Putative S-adenosyl-L-methionine-dependent methyltransferase MAP_1622c (Mycolicibacterium paratuberculosis (strain ATCC BAA-968 / K-10) (Mycobacterium paratuberculosis)).